The chain runs to 30 residues: Photosystem I reaction center subunit XII (30 aa).

The chain crosses the membrane as a helical span at residues valine 6–alanine 26.

Belongs to the PsaM family.

It localises to the cellular thylakoid membrane. This Synechococcus sp. (strain JA-2-3B'a(2-13)) (Cyanobacteria bacterium Yellowstone B-Prime) protein is Photosystem I reaction center subunit XII.